The sequence spans 462 residues: Arginine biosynthesis bifunctional protein ArgJ, mitochondrial (462 aa).

The substrate site is built by Thr200, Lys228, Thr239, Glu326, Asn457, and Thr462. Residue Thr239 is the Nucleophile of the active site.

This sequence belongs to the ArgJ family. Heterodimer of an alpha and a beta chain. In terms of processing, the alpha and beta chains are autoproteolytically processed from a single precursor protein within the mitochondrion.

Its subcellular location is the mitochondrion matrix. The catalysed reaction is N(2)-acetyl-L-ornithine + L-glutamate = N-acetyl-L-glutamate + L-ornithine. It catalyses the reaction L-glutamate + acetyl-CoA = N-acetyl-L-glutamate + CoA + H(+). It functions in the pathway amino-acid biosynthesis; L-arginine biosynthesis; L-ornithine and N-acetyl-L-glutamate from L-glutamate and N(2)-acetyl-L-ornithine (cyclic): step 1/1. The protein operates within amino-acid biosynthesis; L-arginine biosynthesis; N(2)-acetyl-L-ornithine from L-glutamate: step 1/4. Catalyzes two activities which are involved in the cyclic version of arginine biosynthesis: the synthesis of acetylglutamate from glutamate and acetyl-CoA, and of ornithine by transacetylation between acetylornithine and glutamate. The protein is Arginine biosynthesis bifunctional protein ArgJ, mitochondrial of Pyrenophora tritici-repentis (strain Pt-1C-BFP) (Wheat tan spot fungus).